A 342-amino-acid polypeptide reads, in one-letter code: L-threonine 3-dehydrogenase (342 aa).

Position 38 (Cys38) interacts with Zn(2+). Active-site charge relay system residues include Thr40 and His43. Zn(2+) contacts are provided by His63, Glu64, Cys93, Cys96, Cys99, and Cys107. NAD(+)-binding positions include Ile175, Asp195, Arg200, 262-264 (LGL), and 286-287 (IY).

Belongs to the zinc-containing alcohol dehydrogenase family. As to quaternary structure, homotetramer. It depends on Zn(2+) as a cofactor.

It is found in the cytoplasm. It catalyses the reaction L-threonine + NAD(+) = (2S)-2-amino-3-oxobutanoate + NADH + H(+). It participates in amino-acid degradation; L-threonine degradation via oxydo-reductase pathway; glycine from L-threonine: step 1/2. Functionally, catalyzes the NAD(+)-dependent oxidation of L-threonine to 2-amino-3-ketobutyrate. The protein is L-threonine 3-dehydrogenase of Streptomyces avermitilis (strain ATCC 31267 / DSM 46492 / JCM 5070 / NBRC 14893 / NCIMB 12804 / NRRL 8165 / MA-4680).